A 187-amino-acid chain; its full sequence is MIKEILEKTGALMEGHFILSSGKHSSRYVQCARLFEFPEYGDVVGEELAKLLKKYDVETVVGPAMGGVILSYVVARYLKARSLFAERENGVMKLRRGFFVKPGEKVAVVEDVVTTGGSVKEVIELLKEYGANVVCVGSIIDRSGGKVDFGVPFESLLKLDLPVYDPEDCPLCKQGIPAEKPGSRGLK.

110–118 (EDVVTTGGS) contacts 5-phospho-alpha-D-ribose 1-diphosphate. Residues threonine 114 and arginine 142 each contribute to the orotate site.

It belongs to the purine/pyrimidine phosphoribosyltransferase family. PyrE subfamily. In terms of assembly, homodimer. It depends on Mg(2+) as a cofactor.

The enzyme catalyses orotidine 5'-phosphate + diphosphate = orotate + 5-phospho-alpha-D-ribose 1-diphosphate. Its pathway is pyrimidine metabolism; UMP biosynthesis via de novo pathway; UMP from orotate: step 1/2. Functionally, catalyzes the transfer of a ribosyl phosphate group from 5-phosphoribose 1-diphosphate to orotate, leading to the formation of orotidine monophosphate (OMP). In Thermotoga maritima (strain ATCC 43589 / DSM 3109 / JCM 10099 / NBRC 100826 / MSB8), this protein is Orotate phosphoribosyltransferase.